A 575-amino-acid chain; its full sequence is Membrane protein insertase YidC (575 aa).

Transmembrane regions (helical) follow at residues 6 to 26 (VFLI…WGKD), 357 to 377 (FSIM…LHSF), 381 to 401 (WGWA…PLSA), 448 to 468 (GGCL…WVLV), 490 to 510 (PYFI…KLTP), and 526 to 546 (PLVF…YWVV).

This sequence belongs to the OXA1/ALB3/YidC family. Type 1 subfamily. As to quaternary structure, interacts with the Sec translocase complex via SecD. Specifically interacts with transmembrane segments of nascent integral membrane proteins during membrane integration.

The protein resides in the cell inner membrane. Functionally, required for the insertion and/or proper folding and/or complex formation of integral membrane proteins into the membrane. Involved in integration of membrane proteins that insert both dependently and independently of the Sec translocase complex, as well as at least some lipoproteins. Aids folding of multispanning membrane proteins. The polypeptide is Membrane protein insertase YidC (Xanthomonas campestris pv. campestris (strain B100)).